The following is a 468-amino-acid chain: ATP synthase subunit beta (468 aa).

Residue 155–162 (GGAGVGKT) participates in ATP binding.

This sequence belongs to the ATPase alpha/beta chains family. As to quaternary structure, F-type ATPases have 2 components, CF(1) - the catalytic core - and CF(0) - the membrane proton channel. CF(1) has five subunits: alpha(3), beta(3), gamma(1), delta(1), epsilon(1). CF(0) has three main subunits: a(1), b(2) and c(9-12). The alpha and beta chains form an alternating ring which encloses part of the gamma chain. CF(1) is attached to CF(0) by a central stalk formed by the gamma and epsilon chains, while a peripheral stalk is formed by the delta and b chains.

Its subcellular location is the cell membrane. The enzyme catalyses ATP + H2O + 4 H(+)(in) = ADP + phosphate + 5 H(+)(out). Functionally, produces ATP from ADP in the presence of a proton gradient across the membrane. The catalytic sites are hosted primarily by the beta subunits. In Streptococcus pyogenes serotype M5 (strain Manfredo), this protein is ATP synthase subunit beta.